The primary structure comprises 215 residues: V-type ATP synthase subunit D (215 aa).

This sequence belongs to the V-ATPase D subunit family.

Functionally, produces ATP from ADP in the presence of a proton gradient across the membrane. The chain is V-type ATP synthase subunit D from Anaeromyxobacter sp. (strain Fw109-5).